Here is a 690-residue protein sequence, read N- to C-terminus: Copper-exporting P-type ATPase B (690 aa).

The Cytoplasmic segment spans residues 1-64 (MHEHDSHGEA…MEDFKKRFYV (64 aa)). The segment at 23-46 (QHHEHHGHEEEHSAHHEKMKHSAD) is disordered. Residues 28–46 (HGHEEEHSAHHEKMKHSAD) show a composition bias toward basic and acidic residues. Residues 65-85 (STLLTIPILILSPAIQTFLGF) traverse the membrane as a helical segment. Residues 86 to 91 (RVEFAG) lie on the Extracellular side of the membrane. The chain crosses the membrane as a helical span at residues 92–112 (SLYILFLLSSAVYFYGGYPFL). Residues 113–127 (KGIFDELRRRQPGMM) are Cytoplasmic-facing. Residues 128 to 148 (TLIAVAISVAYFYSSAVVFGL) form a helical membrane-spanning segment. Residues 149 to 151 (KGK) lie on the Extracellular side of the membrane. Residues 152-172 (FFFWELATLIDIMLLGHYIEM) form a helical membrane-spanning segment. Residues 173 to 303 (RSVLGASRAL…KSRTQDLANR (131 aa)) lie on the Cytoplasmic side of the membrane. Residues 304–324 (AALLLTVIALTVGSVTLAIWL) form a helical membrane-spanning segment. Over 325–336 (AYIADFAFAIER) the chain is Extracellular. A helical transmembrane segment spans residues 337-357 (AVTVMVITCPHALGLAIPLVV). Topologically, residues 358–640 (AVSTSLAAKS…RKTYSKMKQN (283 aa)) are cytoplasmic. Asp389 acts as the 4-aspartylphosphate intermediate in catalysis. Residues 390–391 (KT), 537–538 (TG), and Lys565 each bind phosphate. The Mg(2+) site is built by Asp583 and Asp587. A helical membrane pass occupies residues 641–661 (LLWATGYNAFAIPLAAGVLYS). The Extracellular segment spans residues 662-663 (AG). The chain crosses the membrane as a helical span at residues 664–684 (ILLSPAVGAILMSLSTVIVAI). Residues 685-690 (NARLLR) are Cytoplasmic-facing.

The protein belongs to the cation transport ATPase (P-type) (TC 3.A.3) family. Type IB subfamily.

Its subcellular location is the cell membrane. The enzyme catalyses Cu(2+)(in) + ATP + H2O = Cu(2+)(out) + ADP + phosphate + H(+). Activated by Cu(2+) and to a lesser extent by Ag(+) and Cu(+). Involved in copper export. In Archaeoglobus fulgidus (strain ATCC 49558 / DSM 4304 / JCM 9628 / NBRC 100126 / VC-16), this protein is Copper-exporting P-type ATPase B (copB).